Reading from the N-terminus, the 536-residue chain is uncharacterized protein (536 aa).

One can recognise a Radical SAM core domain in the interval 163-394 (LDAYDSMSVQ…MNFIPTRPLE (232 aa)). Residues Cys177, Cys181, and Cys184 each coordinate [4Fe-4S] cluster.

[4Fe-4S] cluster serves as cofactor.

This is an uncharacterized protein from Synechocystis sp. (strain ATCC 27184 / PCC 6803 / Kazusa).